The sequence spans 701 residues: CRS2-associated factor 1, chloroplastic (701 aa).

The N-terminal 37 residues, 1–37 (MSLKLNTPFPIFAPSLFPNHNPRAPSEIRFSRWGNAN), are a transit peptide targeting the chloroplast. 2 disordered regions span residues 68-136 (VHTH…PEVK) and 191-221 (LPQS…QKPG). CRM domains lie at 241–337 (EPLT…TRPR) and 359–455 (EGLT…LTTP). The disordered stretch occupies residues 471–532 (LPEDDEPSVS…SLQSWSTKDV (62 aa)). Polar residues-rich tracts occupy residues 479 to 492 (VSPN…QNPP) and 520 to 530 (TINSLQSWSTK). Residues 564 to 586 (RVLILMKQAVESGTALVLDAADL) are CRS2 binding.

As to quaternary structure, interacts with CRS2 and RNA. Part of large ribonucleo-protein complexes that include group IIB introns, CRS2 and CAF1.

It is found in the plastid. Its subcellular location is the chloroplast stroma. Its function is as follows. Required for the splicing of group IIB introns in chloroplasts. Forms splicing particles with CRS2. Interacts with RNA and confers intron specificity of the splicing particles. In Arabidopsis thaliana (Mouse-ear cress), this protein is CRS2-associated factor 1, chloroplastic.